Here is a 348-residue protein sequence, read N- to C-terminus: 3-isopropylmalate dehydrogenase (348 aa).

76–87 serves as a coordination point for NAD(+); the sequence is GPKWTDPNNRPE. Substrate is bound by residues arginine 94, arginine 104, arginine 132, and aspartate 217. Aspartate 217, aspartate 241, and aspartate 245 together coordinate Mg(2+). 275–287 contributes to the NAD(+) binding site; sequence GSAPDIAGKNVAN.

Belongs to the isocitrate and isopropylmalate dehydrogenases family. LeuB type 1 subfamily. In terms of assembly, homodimer. Mg(2+) is required as a cofactor. The cofactor is Mn(2+).

It localises to the cytoplasm. It catalyses the reaction (2R,3S)-3-isopropylmalate + NAD(+) = 4-methyl-2-oxopentanoate + CO2 + NADH. It functions in the pathway amino-acid biosynthesis; L-leucine biosynthesis; L-leucine from 3-methyl-2-oxobutanoate: step 3/4. Catalyzes the oxidation of 3-carboxy-2-hydroxy-4-methylpentanoate (3-isopropylmalate) to 3-carboxy-4-methyl-2-oxopentanoate. The product decarboxylates to 4-methyl-2 oxopentanoate. This is 3-isopropylmalate dehydrogenase from Staphylococcus aureus (strain NCTC 8325 / PS 47).